A 170-amino-acid chain; its full sequence is ATP synthase subunit b, chloroplastic (170 aa).

The chain crosses the membrane as a helical span at residues 15-35 (ILETNVINLAVVVGVVVFFVG).

It belongs to the ATPase B chain family. In terms of assembly, F-type ATPases have 2 components, F(1) - the catalytic core - and F(0) - the membrane proton channel. F(1) has five subunits: alpha(3), beta(3), gamma(1), delta(1), epsilon(1). F(0) has four main subunits: a(1), b(1), b'(1) and c(10-14). The alpha and beta chains form an alternating ring which encloses part of the gamma chain. F(1) is attached to F(0) by a central stalk formed by the gamma and epsilon chains, while a peripheral stalk is formed by the delta, b and b' chains.

Its subcellular location is the plastid. The protein localises to the chloroplast thylakoid membrane. In terms of biological role, f(1)F(0) ATP synthase produces ATP from ADP in the presence of a proton or sodium gradient. F-type ATPases consist of two structural domains, F(1) containing the extramembraneous catalytic core and F(0) containing the membrane proton channel, linked together by a central stalk and a peripheral stalk. During catalysis, ATP synthesis in the catalytic domain of F(1) is coupled via a rotary mechanism of the central stalk subunits to proton translocation. Its function is as follows. Component of the F(0) channel, it forms part of the peripheral stalk, linking F(1) to F(0). The polypeptide is ATP synthase subunit b, chloroplastic (Stigeoclonium helveticum (Green alga)).